Consider the following 848-residue polypeptide: Adenylate cyclase (848 aa).

The catalytic stretch occupies residues 1–535 (MYLYIETLKQ…DVSHHFPLRL (535 aa)). Residues 541 to 848 (KALYSPCEIR…DTPLLQQYFS (308 aa)) are regulatory. His-609 is modified (phosphohistidine; by CRR).

Belongs to the adenylyl cyclase class-1 family.

It localises to the cytoplasm. It carries out the reaction ATP = 3',5'-cyclic AMP + diphosphate. With respect to regulation, the regulatory domain is involved in the regulation of cyclase activity by the carbon source. Activated by the PTS system, glucose-specific IIA component (CRR). Catalyzes the formation of the second messenger cAMP from ATP. Its transcript is probably degraded by endoribonuclease LS (rnlA), decreasing cAMP levels and the negative regulator Crp-cAMP, which then induces its own transcription again. The protein is Adenylate cyclase (cyaA) of Escherichia coli (strain K12).